The following is a 123-amino-acid chain: Small ribosomal subunit protein eS8 (123 aa).

Residues 1–38 are disordered; it reads MKDQGRSPRKRTGGRRRPNHKKKKHELGKDTVETQVGE. A compositionally biased stretch (basic residues) spans 7–26; it reads SPRKRTGGRRRPNHKKKKHE.

In terms of assembly, part of the 30S ribosomal subunit.

The protein is Small ribosomal subunit protein eS8 (rps8e) of Haloarcula marismortui (strain ATCC 43049 / DSM 3752 / JCM 8966 / VKM B-1809) (Halobacterium marismortui).